The following is an 886-amino-acid chain: General transcription factor 3C polypeptide 3 (886 aa).

The interval 1–121 (MSGFSPELID…TPEQPTAGDV (121 aa)) is disordered. Position 2 is an N-acetylserine (S2). Residues 12 to 44 (LEGKISFEEFERRREERKTREKKSLQEKGKLSA) show a composition bias toward basic and acidic residues. The residue at position 43 (S43) is a Phosphoserine. Polar residues predominate over residues 53–63 (VPSSSGINSTK). Residues 92–113 (ENEDDEEEEEEEEEEEEEEETP) show a composition bias toward acidic residues. TPR repeat units follow at residues 149–182 (LRGL…APLA), 183–216 (YEPF…NPSD), 217–250 (TEEW…EPTN), 252–284 (RYLW…LSPS), 290–323 (MQLA…HQGL), 326–361 (MEDV…EKKT), 421–454 (GDLY…ERYN), 456–489 (AVVW…APLH), 491–523 (DARI…DTLA), 733–766 (HALC…HPDE), and 811–844 (QESF…PPLV). A Phosphoserine modification is found at S282.

In terms of assembly, part of the TFIIIC subcomplex TFIIIC2, consisting of six subunits, GTF3C1, GTF3C2, GTF3C3, GTF3C4, GTF3C5 and GTF3C6. Interacts with BRF1 and TBP.

The protein resides in the nucleus. Functionally, involved in RNA polymerase III-mediated transcription. Integral, tightly associated component of the DNA-binding TFIIIC2 subcomplex that directly binds tRNA and virus-associated RNA promoters. This Homo sapiens (Human) protein is General transcription factor 3C polypeptide 3 (GTF3C3).